We begin with the raw amino-acid sequence, 271 residues long: Phosphatidylglycerol--prolipoprotein diacylglyceryl transferase (271 aa).

Transmembrane regions (helical) follow at residues 18 to 38, 51 to 71, 89 to 109, and 115 to 135; these read LSVH…LWMA, IFID…RAYY, IWKG…TGIV, and GISF…GQAI. R137 contacts a 1,2-diacyl-sn-glycero-3-phospho-(1'-sn-glycerol). 3 consecutive transmembrane segments (helical) span residues 177-197, 205-225, and 236-256; these read HPTF…LLLL, GNLF…IEGM, and LRIA…LMIF.

It belongs to the Lgt family.

It localises to the cell membrane. It carries out the reaction L-cysteinyl-[prolipoprotein] + a 1,2-diacyl-sn-glycero-3-phospho-(1'-sn-glycerol) = an S-1,2-diacyl-sn-glyceryl-L-cysteinyl-[prolipoprotein] + sn-glycerol 1-phosphate + H(+). It participates in protein modification; lipoprotein biosynthesis (diacylglyceryl transfer). Its function is as follows. Catalyzes the transfer of the diacylglyceryl group from phosphatidylglycerol to the sulfhydryl group of the N-terminal cysteine of a prolipoprotein, the first step in the formation of mature lipoproteins. This chain is Phosphatidylglycerol--prolipoprotein diacylglyceryl transferase, found in Bacillus velezensis (strain DSM 23117 / BGSC 10A6 / LMG 26770 / FZB42) (Bacillus amyloliquefaciens subsp. plantarum).